A 216-amino-acid chain; its full sequence is Large ribosomal subunit protein uL3 (216 aa).

Residue Gln-157 is modified to N5-methylglutamine.

Belongs to the universal ribosomal protein uL3 family. In terms of assembly, part of the 50S ribosomal subunit. Forms a cluster with proteins L14 and L19. Post-translationally, methylated by PrmB.

Functionally, one of the primary rRNA binding proteins, it binds directly near the 3'-end of the 23S rRNA, where it nucleates assembly of the 50S subunit. This is Large ribosomal subunit protein uL3 from Xanthomonas campestris pv. campestris (strain 8004).